Consider the following 70-residue polypeptide: Protein tam14 (70 aa).

Positions 1-19 (MPTVQTPSQRRANTQFQKN) are enriched in polar residues. The segment at 1–20 (MPTVQTPSQRRANTQFQKNI) is disordered. The helical transmembrane segment at 45-65 (IAMFFILLMSGGIILGILRFL) threads the bilayer.

It belongs to the RAMP4 family.

Its subcellular location is the membrane. The protein resides in the endoplasmic reticulum membrane. In terms of biological role, interacts with target proteins during their translocation into the lumen of the endoplasmic reticulum. Protects unfolded target proteins against degradation during ER stress. May facilitate glycosylation of target proteins after termination of ER stress. This Schizosaccharomyces pombe (strain 972 / ATCC 24843) (Fission yeast) protein is Protein tam14 (tam14).